A 394-amino-acid polypeptide reads, in one-letter code: Sugar efflux transporter C (394 aa).

Residues 1 to 10 are Periplasmic-facing; the sequence is MQKTATTPSK. Residues 11–31 traverse the membrane as a helical segment; it reads ILDLTAAAFLLVAFLTGIAGA. Residues 32–49 are Cytoplasmic-facing; it reads LQTPTLSIFLADELKARP. The helical transmembrane segment at 50-70 threads the bilayer; the sequence is IMVGFFFTGSAIMGILVSQFL. The Periplasmic segment spans residues 71–80; the sequence is ARHSDKQGDR. A helical membrane pass occupies residues 81 to 101; that stretch reads KLLILLCCLFGVLACTLFAWN. Topologically, residues 102–104 are cytoplasmic; that stretch reads RNY. The chain crosses the membrane as a helical span at residues 105 to 125; that stretch reads FILLSTGVLLSSFASTANPQM. The Periplasmic segment spans residues 126-150; that stretch reads FALAREHADRTGRETVMFSTFLRAQ. A helical membrane pass occupies residues 151 to 171; the sequence is ISLAWVIGPPLAYELAMGFSF. A topological domain (cytoplasmic) is located at residue K172. Residues 173 to 193 form a helical membrane-spanning segment; the sequence is VMYLTAAIAFVVCGLIVWLFL. Residues 194 to 224 lie on the Periplasmic side of the membrane; sequence PSIQRNIPVVTQPVEILPSTHRKRDTRLLFV. A helical transmembrane segment spans residues 225–245; sequence VCSMMWAANNLYMINMPLFII. Residues 246–253 are Cytoplasmic-facing; the sequence is DELHLTDK. Residues 254 to 274 form a helical membrane-spanning segment; it reads LTGEMIGIAAGLEIPMMLIAG. Topologically, residues 275–283 are periplasmic; sequence YYMKRIGKR. A helical membrane pass occupies residues 284–304; that stretch reads LLMLIAIVSGMCFYASVLMAT. Residues 305–310 are Cytoplasmic-facing; that stretch reads TPAVEL. The helical transmembrane segment at 311–331 threads the bilayer; that stretch reads ELQILNAIFLGILCGIGMLYF. Topologically, residues 332 to 370 are periplasmic; it reads QDLMPEKIGSATTLYANTSRVGWIIAGSVDGIMVEIWSY. A helical transmembrane segment spans residues 371 to 391; sequence HALFWLAIGMLGIAMICLLFI. Residues 392–394 are Cytoplasmic-facing; the sequence is KDI.

This sequence belongs to the major facilitator superfamily. Set transporter family.

It is found in the cell inner membrane. Its function is as follows. Involved in the efflux of sugars. The physiological role may be the detoxification of non-metabolizable sugar analogs. The protein is Sugar efflux transporter C (setC) of Escherichia coli (strain K12).